Reading from the N-terminus, the 1331-residue chain is ABC multidrug transporter MDR2 (1331 aa).

Basic and acidic residues-rich tracts occupy residues 1–20 and 31–41; these read MVEV…KQEN and SDKEKVAKKGN. The disordered stretch occupies residues 1 to 51; that stretch reads MVEVSEKPNTQDDGVSKQENRNPASSSSSTSDKEKVAKKGNSDATKSSTPE. A run of 4 helical transmembrane segments spans residues 93–113, 147–167, 219–239, and 242–262; these read MIFL…LPLF, YFVY…VGFI, KVGL…IGYV, and WKLA…MGGI. Positions 97–387 constitute an ABC transmembrane type-1 1 domain; that stretch reads AIVSLASIAA…VAPNTQAFAS (291 aa). N-linked (GlcNAc...) asparagine glycosylation occurs at Asn293. A run of 2 helical transmembrane segments spans residues 325-345 and 358-378; these read LGIM…LGFW and LSAI…IGNV. The ABC transporter 1 domain occupies 422-667; the sequence is IEFRGIKHIY…KGTYLQLVEA (246 aa). Residue 457–464 participates in ATP binding; that stretch reads GPSGSGKS. Residues Asn529 and Asn737 are each glycosylated (N-linked (GlcNAc...) asparagine). 2 helical membrane-spanning segments follow: residues 762–782 and 810–830; these read LCGF…SVFF and FLML…IFAI. The ABC transmembrane type-1 2 domain occupies 764–1051; sequence GFFFAVLSGA…VFSFSPDMGK (288 aa). An N-linked (GlcNAc...) asparagine glycan is attached at Asn860. A run of 4 helical transmembrane segments spans residues 884–904, 910–930, 995–1015, and 1025–1045; these read LGTI…ALAF, LVCI…FWIL, ASQS…GGLL, and FFLC…VFSF. One can recognise an ABC transporter 2 domain in the interval 1086–1324; it reads IEFRDVHFRY…KGRYYELVHM (239 aa). The N-linked (GlcNAc...) asparagine glycan is linked to Asn1108. Residue 1121–1128 participates in ATP binding; it reads GPSGCGKS.

It belongs to the ABC transporter superfamily. ABCB family. Multidrug resistance exporter (TC 3.A.1.201) subfamily.

It localises to the cell membrane. The catalysed reaction is itraconazole(in) + ATP + H2O = itraconazole(out) + ADP + phosphate + H(+). Pleiotropic ABC efflux transporter that may be involved in the modulation susceptibility to a wide range of unrelated cytotoxic compounds. This is ABC multidrug transporter MDR2 from Trichophyton equinum (strain ATCC MYA-4606 / CBS 127.97) (Horse ringworm fungus).